The chain runs to 113 residues: Mitochondrial import inner membrane translocase subunit PAM16 like 1 (113 aa).

The transit peptide at 1–48 (MAARVLASVIVMGSGIIARACTQAYRQALANASKTGVAHEATQTIKRG) directs the protein to the mitochondrion. Residues 55–104 (EARQILGVTEKSSWDEILKKYDTLFERNAQNGSFYLQSKVHRAKECLETA) form a J-like region.

This sequence belongs to the TIM16/PAM16 family. As to expression, expressed at low levels in seedlings, rosettes and inflorescence.

Its subcellular location is the mitochondrion inner membrane. In terms of biological role, regulates ATP-dependent protein translocation into the mitochondrial matrix. The sequence is that of Mitochondrial import inner membrane translocase subunit PAM16 like 1 from Arabidopsis thaliana (Mouse-ear cress).